A 77-amino-acid polypeptide reads, in one-letter code: Acyl carrier protein (77 aa).

Residues 2-77 form the Carrier domain; sequence SNIEERVKKI…AAIDYVSKNQ (76 aa). Position 37 is an O-(pantetheine 4'-phosphoryl)serine (Ser-37).

This sequence belongs to the acyl carrier protein (ACP) family. 4'-phosphopantetheine is transferred from CoA to a specific serine of apo-ACP by AcpS. This modification is essential for activity because fatty acids are bound in thioester linkage to the sulfhydryl of the prosthetic group.

The protein resides in the cytoplasm. It functions in the pathway lipid metabolism; fatty acid biosynthesis. Functionally, carrier of the growing fatty acid chain in fatty acid biosynthesis. The polypeptide is Acyl carrier protein (Shewanella oneidensis (strain ATCC 700550 / JCM 31522 / CIP 106686 / LMG 19005 / NCIMB 14063 / MR-1)).